Here is a 323-residue protein sequence, read N- to C-terminus: Olfactory receptor 1E2 (323 aa).

Over 1 to 25 (MMGQNQTSISDFLLLGLPIQPEQQN) the chain is Extracellular. An N-linked (GlcNAc...) asparagine glycan is attached at Asn-5. Residues 26-49 (LCYALFLAMYLTTLLGNLLIIVLI) form a helical membrane-spanning segment. Topologically, residues 50 to 57 (RLDSHLHT) are cytoplasmic. A helical transmembrane segment spans residues 58-79 (PVYLFLSNLSFSDLCFSSVTMP). Topologically, residues 80-100 (KLLQNMQNQDPSIPYADCLTQ) are extracellular. A disulfide bridge connects residues Cys-97 and Cys-198. A helical membrane pass occupies residues 101–120 (MYFFLYFSDLESFLLVAMAY). Over 121–148 (DRYVAICFPMHYTAICFLLHYTAIMSPM) the chain is Cytoplasmic. The chain crosses the membrane as a helical span at residues 149-167 (LCLSVVALSWVLTTFHAML). Residues 168–205 (HTLLMARLCFCADNVIPHFFCDMSALLKLACSDTRVNE) lie on the Extracellular side of the membrane. A helical transmembrane segment spans residues 206–228 (WVIFIMGGLILVIPFLLILGSYA). Over 229–245 (RIVSSILKVPSSKGICK) the chain is Cytoplasmic. A helical membrane pass occupies residues 246 to 269 (AFSTCGSHLSVVSLFYGTVIGLYL). Residues 270-281 (CPSANSSTLKDT) are Extracellular-facing. N-linked (GlcNAc...) asparagine glycosylation is present at Asn-274. Residues 282 to 301 (VMAMMYTVVTPMLTPFIYSL) traverse the membrane as a helical segment. The Cytoplasmic segment spans residues 302-323 (RNRDMKGALERVICKRKNPFLL).

The protein belongs to the G-protein coupled receptor 1 family.

The protein resides in the cell membrane. In terms of biological role, odorant receptor. The sequence is that of Olfactory receptor 1E2 (OR1E2) from Homo sapiens (Human).